Here is an 842-residue protein sequence, read N- to C-terminus: MSNILRKVIENDKGELRKLEKIAKKVESYADYMESLSDKDLQAKTPEFKQRYQNGETLEQLLPEAFAVVREAARRVLGLYPYRVQIMGGIVLHNGDVPEMRTGEGKTLTATMPVYLNALAGEGVHVITVNEYLSTRDATEMGEVYSWLGLSVGINLAAKSPAEKREAYLCDITYSTNSEVGFDYLRDNMVVRQEDMVQRPLNFALVDEVDSVLIDEARTPLIVSGAVSSETNQLYIRADMFVKTLDSVDYIIDVPTKTIGLSDSGIDKAESYFNLSNLYDIENVALTHFVDNALRANYIMLLDIDYVVSEEGEILIVDQFTGRTMEGRRFSDGLHQAIEAKEGVRIQEESKTSASITYQNMFRMYKKLAGMTGTAKTEEEEFREVYNMRIIPIPTNRPIARIDHTDLLYATLNSKFKAVVADVKARYEKGQPVLVGTVAVETSDLISKKLVEAGIPHEVLNAKNHFKEAQIIMNAGQRGAVTIATNMAGRGTDIKLGEGVRELGGLCVIGTERHESRRIDNQLRGRSGRQGDPGESQFYLSLEDELMRRFGTDRIKAFLDRMNNDDEDIVIKSRMLSRQVESAQKRVEGNNYDTRKQVLQYDDVMREQREIIYANRRDVITANRDLGPEIKAMIKRTIDRAVDAHSRTNRKDAIDAIVTFARTSIVPEETIGAKELRGLKDDQIKDKLYQRALEIYDKQLSKLRDQDAILEFQKVLILMIVDNKWTEHIDALDQLRNAVGLRGYAQNNPVVEYQSEGFKMFQDMIGAIEFDVTRTMMKAQIHEQERERATQYATTTAAQNIQSQAIGDDFDSSADFSRVERNDACPCHSGKKFKNCHGRKAF.

ATP-binding positions include glutamine 85, 103–107 (GEGKT), and aspartate 493. Zn(2+)-binding residues include cysteine 825, cysteine 827, cysteine 836, and histidine 837.

The protein belongs to the SecA family. As to quaternary structure, monomer and homodimer. Part of the essential Sec protein translocation apparatus which comprises SecA, SecYEG and auxiliary proteins SecDF. Other proteins may also be involved. Requires Zn(2+) as cofactor.

The protein localises to the cell membrane. It is found in the cytoplasm. It carries out the reaction ATP + H2O + cellular proteinSide 1 = ADP + phosphate + cellular proteinSide 2.. Part of the Sec protein translocase complex. Interacts with the SecYEG preprotein conducting channel. Has a central role in coupling the hydrolysis of ATP to the transfer of proteins into and across the cell membrane, serving as an ATP-driven molecular motor driving the stepwise translocation of polypeptide chains across the membrane. The protein is Protein translocase subunit SecA of Streptococcus equi subsp. zooepidemicus (strain H70).